The following is a 48-amino-acid chain: ATP synthase protein 8 (48 aa).

Residues 4 to 24 form a helical membrane-spanning segment; it reads LVPFFFVNQVVYAFVILTVLI.

It belongs to the ATPase protein 8 family. In terms of assembly, F-type ATPases have 2 components, CF(1) - the catalytic core - and CF(0) - the membrane proton channel.

It localises to the mitochondrion membrane. Functionally, mitochondrial membrane ATP synthase (F(1)F(0) ATP synthase or Complex V) produces ATP from ADP in the presence of a proton gradient across the membrane which is generated by electron transport complexes of the respiratory chain. F-type ATPases consist of two structural domains, F(1) - containing the extramembraneous catalytic core and F(0) - containing the membrane proton channel, linked together by a central stalk and a peripheral stalk. During catalysis, ATP synthesis in the catalytic domain of F(1) is coupled via a rotary mechanism of the central stalk subunits to proton translocation. Part of the complex F(0) domain. Minor subunit located with subunit a in the membrane. This is ATP synthase protein 8 (atp8) from Aspergillus amstelodami.